The following is a 349-amino-acid chain: Anthranilate phosphoribosyltransferase (349 aa).

5-phospho-alpha-D-ribose 1-diphosphate-binding positions include Gly-82, 85–86 (GD), 92–95 (NVST), 110–118 (KHGNRAVSG), and Ser-122. Gly-82 serves as a coordination point for anthranilate. Ser-94 provides a ligand contact to Mg(2+). Asn-113 is a binding site for anthranilate. Arg-168 serves as a coordination point for anthranilate. Asp-227 and Glu-228 together coordinate Mg(2+).

This sequence belongs to the anthranilate phosphoribosyltransferase family. Homodimer. It depends on Mg(2+) as a cofactor.

The catalysed reaction is N-(5-phospho-beta-D-ribosyl)anthranilate + diphosphate = 5-phospho-alpha-D-ribose 1-diphosphate + anthranilate. It participates in amino-acid biosynthesis; L-tryptophan biosynthesis; L-tryptophan from chorismate: step 2/5. Its function is as follows. Catalyzes the transfer of the phosphoribosyl group of 5-phosphorylribose-1-pyrophosphate (PRPP) to anthranilate to yield N-(5'-phosphoribosyl)-anthranilate (PRA). The chain is Anthranilate phosphoribosyltransferase from Pseudomonas putida (strain ATCC 47054 / DSM 6125 / CFBP 8728 / NCIMB 11950 / KT2440).